The following is a 179-amino-acid chain: Transcription factor 21 (179 aa).

Residues 19–88 form a disordered region; that stretch reads DCDSLKVDSN…VQRNAANARE (70 aa). Polar residues-rich tracts occupy residues 30 to 49 and 70 to 80; these read EFGT…NGSP and SGVSQEGKQVQ. Residues 79 to 131 enclose the bHLH domain; sequence VQRNAANARERARMRVLSKAFSRLKTTLPWVPPDTKLSKLDTLRLASSYIAHL.

As to quaternary structure, efficient DNA binding requires dimerization with another bHLH protein. Forms a heterodimer with TCF3 and binds the E box (5'-CANNTG-3'). Expressed at high levels in lung, kidney, gut, heart, ovary and podocytes (visceral glomerular epithelial cells). Also found in spleen, large intestine, uterus, bladder and testis.

It is found in the nucleus. In terms of biological role, involved in epithelial-mesenchymal interactions in kidney and lung morphogenesis that include epithelial differentiation and branching morphogenesis. May be involved in the organogenesis of the spleen and heart and in cardiac and coronary artery development. May function in the development and sex differentiation of gonad via transcriptional regulation of AD4BP/SF-1. The chain is Transcription factor 21 (Tcf21) from Mus musculus (Mouse).